The sequence spans 250 residues: Flap endonuclease Xni (250 aa).

Aspartate 104 provides a ligand contact to Mg(2+). The 5'-3' exonuclease domain maps to 160 to 249 (VQPQQLTDFW…LQGNLQQLRL (90 aa)). Leucine 171, alanine 172, proline 180, valine 182, and isoleucine 185 together coordinate K(+). The interval 184-189 (GIGPKS) is interaction with DNA.

This sequence belongs to the Xni family. Mg(2+) serves as cofactor. It depends on K(+) as a cofactor.

Its function is as follows. Has flap endonuclease activity. During DNA replication, flap endonucleases cleave the 5'-overhanging flap structure that is generated by displacement synthesis when DNA polymerase encounters the 5'-end of a downstream Okazaki fragment. The polypeptide is Flap endonuclease Xni (Sodalis glossinidius (strain morsitans)).